Consider the following 738-residue polypeptide: Eukaryotic translation initiation factor 3 subunit B (738 aa).

Residues 1 to 120 form a sufficient for interaction with HCR1 and TIF32 region; it reads MCGCVGVISN…LFIQFKTAQM (120 aa). The segment at 1–245 is sufficient for interaction with PIC8; the sequence is MCGCVGVISN…GIQSWGGAQF (245 aa). The RRM domain occupies 59-146; the sequence is NFVVVDGAPI…HRLLVNKLSD (88 aa). WD repeat units follow at residues 211–250, 322–360, 363–406, and 537–579; these read PRKG…SISK, QKEM…LLDK, VKID…QTAR, and VVDK…ENVR.

Belongs to the eIF-3 subunit B family. In terms of assembly, component of the eukaryotic translation initiation factor 3 (eIF-3) complex.

The protein resides in the cytoplasm. In terms of biological role, RNA-binding component of the eukaryotic translation initiation factor 3 (eIF-3) complex, which is involved in protein synthesis of a specialized repertoire of mRNAs and, together with other initiation factors, stimulates binding of mRNA and methionyl-tRNAi to the 40S ribosome. The eIF-3 complex specifically targets and initiates translation of a subset of mRNAs involved in cell proliferation. The polypeptide is Eukaryotic translation initiation factor 3 subunit B (Meyerozyma guilliermondii (strain ATCC 6260 / CBS 566 / DSM 6381 / JCM 1539 / NBRC 10279 / NRRL Y-324) (Yeast)).